Here is a 237-residue protein sequence, read N- to C-terminus: Uridylate kinase (237 aa).

Position 10–13 (Lys10–Gly13) interacts with ATP. Gly51 contributes to the UMP binding site. The ATP site is built by Gly52 and Arg56. Residues Asp71 and Thr133–Thr140 each bind UMP. The ATP site is built by Thr160, Tyr166, and Asp169.

The protein belongs to the UMP kinase family. Homohexamer.

It localises to the cytoplasm. It carries out the reaction UMP + ATP = UDP + ADP. The protein operates within pyrimidine metabolism; CTP biosynthesis via de novo pathway; UDP from UMP (UMPK route): step 1/1. Inhibited by UTP. Functionally, catalyzes the reversible phosphorylation of UMP to UDP. In Vesicomyosocius okutanii subsp. Calyptogena okutanii (strain HA), this protein is Uridylate kinase.